The sequence spans 377 residues: Leukocyte elastase inhibitor (377 aa).

Met1 carries the N-acetylmethionine modification. An N6-acetyllysine modification is found at Lys136. Ser298 is modified (phosphoserine). The tract at residues 349–377 (EFVADHPFIFFIRHKPSSNILFLGRLSSP) is CARD-binding motif (CBM).

The protein belongs to the serpin family. Ov-serpin subfamily. In terms of assembly, monomer. Interacts (via C-terminus) with CASP1; CASP4 (via CARD domain) and CASP5; these interactions regulate the activity of inflammatory caspases. Interacts with PRTN3. Interacts with GZMH.

The protein localises to the secreted. The protein resides in the cytoplasm. It localises to the cytolytic granule. It is found in the early endosome. Neutrophil serine protease inhibitor that plays an essential role in the regulation of the innate immune response, inflammation and cellular homeostasis. Acts primarily to protect the cell from proteases released in the cytoplasm during stress or infection. These proteases are important in killing microbes but when released from granules, these potent enzymes also destroy host proteins and contribute to mortality. Regulates the activity of the neutrophil proteases elastase, cathepsin G, proteinase-3, chymase, chymotrypsin, and kallikrein-3. Also acts as a potent intracellular inhibitor of GZMH by directly blocking its proteolytic activity. During inflammation, limits the activity of inflammatory caspases CASP1, CASP4 and CASP5 by suppressing their caspase-recruitment domain (CARD) oligomerization and enzymatic activation. When secreted, promotes the proliferation of beta-cells via its protease inhibitory function. The polypeptide is Leukocyte elastase inhibitor (SERPINB1) (Bos taurus (Bovine)).